The chain runs to 108 residues: Mitochondrial protein PET191 (108 aa).

The CHCH domain maps to 18–64; sequence RSPCVMIERHNPQECLDNPELNKDLPELCIAQMKAFLDCKRGIVDMT. A Cx10C motif motif is present at residues 21-32; that stretch reads CVMIERHNPQEC. 2 cysteine pairs are disulfide-bonded: cysteine 21-cysteine 56 and cysteine 32-cysteine 46. The short motif at 46–56 is the Cx9C motif element; it reads CIAQMKAFLDC.

The protein belongs to the PET191 family.

The protein localises to the mitochondrion intermembrane space. Involved in the assembly of cytochrome c oxidase. The chain is Mitochondrial protein PET191 (PET191) from Saccharomyces cerevisiae (strain ATCC 204508 / S288c) (Baker's yeast).